The following is a 291-amino-acid chain: Tyramine--L-glutamate ligase (291 aa).

The 171-residue stretch at 104–274 (KYPVKNLGCS…LAELLIKNAN (171 aa)) folds into the ATP-grasp domain. An ATP-binding site is contributed by 131 to 176 (KDYVKTPKTFKPKKYVIKKIDGCGGKFNLFDENFLIQEFVEGESLS). Aspartate 236, glutamate 247, and asparagine 249 together coordinate Mg(2+). Aspartate 236, glutamate 247, and asparagine 249 together coordinate Mn(2+).

It depends on Mg(2+) as a cofactor. The cofactor is Mn(2+).

The enzyme catalyses tyramine + L-glutamate + ATP = gamma-L-glutamyltyramine + ADP + phosphate + H(+). It participates in cofactor biosynthesis; methanofuran biosynthesis. In terms of biological role, catalyzes the formation of an amide bond between tyramine and the gamma carboxy group of L-glutamate. The enzyme also accepts phenylethylamine in vitro. This is Tyramine--L-glutamate ligase from Methanocaldococcus fervens (strain DSM 4213 / JCM 15782 / AG86) (Methanococcus fervens).